Here is a 128-residue protein sequence, read N- to C-terminus: uncharacterized protein (128 aa).

This is an uncharacterized protein from Bacillus subtilis (strain 168).